We begin with the raw amino-acid sequence, 697 residues long: Pentatricopeptide repeat-containing protein At2g13600 (697 aa).

PPR repeat units lie at residues aspartate 18–asparagine 53, glutamate 54–arginine 84, asparagine 85–arginine 115, aspartate 116–leucine 150, asparagine 151–serine 185, aspartate 186–arginine 216, asparagine 217–proline 251, aspartate 252–asparagine 282, aspartate 288–alanine 322, threonine 324–arginine 349, asparagine 350–proline 384, threonine 385–phenylalanine 419, aspartate 426–arginine 456, aspartate 457–proline 491, aspartate 492–proline 527, and leucine 528–glutamine 558. Positions isoleucine 563–glutamine 638 are type E motif. A type E(+) motif region spans residues glycine 639–arginine 669.

Belongs to the PPR family. PCMP-E subfamily.

This chain is Pentatricopeptide repeat-containing protein At2g13600 (PCMP-E76), found in Arabidopsis thaliana (Mouse-ear cress).